Consider the following 101-residue polypeptide: MKTKLKVGDNVKILCGKDRGKTGEIVSIDRKNLKVVVKSCNMVKKVIKARTPQEKSKIIDKEAPVDISNVMLFSNGITSRVGIKFENKEKKRYLKKNGENV.

The protein belongs to the universal ribosomal protein uL24 family. As to quaternary structure, part of the 50S ribosomal subunit.

One of two assembly initiator proteins, it binds directly to the 5'-end of the 23S rRNA, where it nucleates assembly of the 50S subunit. Its function is as follows. One of the proteins that surrounds the polypeptide exit tunnel on the outside of the subunit. The polypeptide is Large ribosomal subunit protein uL24 (Borrelia hermsii (strain HS1 / DAH)).